We begin with the raw amino-acid sequence, 688 residues long: Glycine--tRNA ligase beta subunit (688 aa).

Belongs to the class-II aminoacyl-tRNA synthetase family. Tetramer of two alpha and two beta subunits.

It is found in the cytoplasm. It carries out the reaction tRNA(Gly) + glycine + ATP = glycyl-tRNA(Gly) + AMP + diphosphate. The sequence is that of Glycine--tRNA ligase beta subunit from Vibrio atlanticus (strain LGP32) (Vibrio splendidus (strain Mel32)).